Here is a 312-residue protein sequence, read N- to C-terminus: Ribosomal RNA small subunit methyltransferase H (312 aa).

Residues 34-36 (GGH), Asp-54, Phe-81, Asp-102, and Gln-109 each bind S-adenosyl-L-methionine.

Belongs to the methyltransferase superfamily. RsmH family.

Its subcellular location is the cytoplasm. It catalyses the reaction cytidine(1402) in 16S rRNA + S-adenosyl-L-methionine = N(4)-methylcytidine(1402) in 16S rRNA + S-adenosyl-L-homocysteine + H(+). Specifically methylates the N4 position of cytidine in position 1402 (C1402) of 16S rRNA. The protein is Ribosomal RNA small subunit methyltransferase H of Geotalea uraniireducens (strain Rf4) (Geobacter uraniireducens).